A 369-amino-acid polypeptide reads, in one-letter code: UDP-N-acetylenolpyruvoylglucosamine reductase (369 aa).

The FAD-binding PCMH-type domain occupies 29-202 (VGPIARRVIT…LEVEFALDPS (174 aa)). Arg-176 is an active-site residue. Catalysis depends on Ser-257, which acts as the Proton donor. Glu-361 is a catalytic residue.

The protein belongs to the MurB family. The cofactor is FAD.

The protein resides in the cytoplasm. It catalyses the reaction UDP-N-acetyl-alpha-D-muramate + NADP(+) = UDP-N-acetyl-3-O-(1-carboxyvinyl)-alpha-D-glucosamine + NADPH + H(+). Its pathway is cell wall biogenesis; peptidoglycan biosynthesis. Cell wall formation. In Mycobacterium tuberculosis (strain ATCC 25177 / H37Ra), this protein is UDP-N-acetylenolpyruvoylglucosamine reductase.